The primary structure comprises 268 residues: Ubiquinone biosynthesis protein COQ4 homolog, mitochondrial (268 aa).

Zn(2+) is bound by residues His171, Asp172, His175, and Glu187.

This sequence belongs to the COQ4 family. Component of a multi-subunit COQ enzyme complex. Zn(2+) serves as cofactor.

Its subcellular location is the mitochondrion inner membrane. The enzyme catalyses a 4-hydroxy-3-methoxy-5-(all-trans-polyprenyl)benzoate + H(+) = a 2-methoxy-6-(all-trans-polyprenyl)phenol + CO2. It participates in cofactor biosynthesis; ubiquinone biosynthesis. Its function is as follows. Lyase that catalyzes the C1-decarboxylation of 4-hydroxy-3-methoxy-5-(all-trans-polyprenyl)benzoic acid into 2-methoxy-6-(all-trans-polyprenyl)phenol during ubiquinone biosynthesis. In Drosophila melanogaster (Fruit fly), this protein is Ubiquinone biosynthesis protein COQ4 homolog, mitochondrial.